Reading from the N-terminus, the 431-residue chain is MIRLTPASAHGLHGHVTVPGDKSISHRALMFGAIAKGQTVITNFLASDDVLHTMTVFRNLGVAIQQNENSVRIQGQGFDGLTPPKKPLDMGNSGTSTRLLMGLLSKQNFDMSIIGDESLSQRPMTRVMKPLTEMGAKIDLTANGTLPGIIQANATLRGITYDMPVASAQVKSAILLAGIQAEGETCVIEKIASRDHTERMLRQFGGQLESKNGVITLKKQQQLQGQHVDVPADISSAAFFLVAALITPNSELTINRVGINPTRDGILKILTRMGASIEVTPIDTQGEPLADLTVRTQTLHGIDITAADIPSAVDELPIIALAATQADGDTIISGAEELRVKETDRIATVISELSKLGANIEEKPDGMIIHGGQSLTADNDAVLLDSCGDHRIAMMNAIAALITTGDVILTGEDAMSVSYPGFLEDLSEVML.

3-phosphoshikimate contacts are provided by lysine 22, serine 23, and arginine 27. Lysine 22 is a binding site for phosphoenolpyruvate. Residues glycine 94 and arginine 122 each contribute to the phosphoenolpyruvate site. Positions 167, 169, 314, and 341 each coordinate 3-phosphoshikimate. Glutamine 169 lines the phosphoenolpyruvate pocket. Residue aspartate 314 is the Proton acceptor of the active site. Phosphoenolpyruvate contacts are provided by arginine 345 and arginine 391.

Belongs to the EPSP synthase family. Monomer.

The protein localises to the cytoplasm. It catalyses the reaction 3-phosphoshikimate + phosphoenolpyruvate = 5-O-(1-carboxyvinyl)-3-phosphoshikimate + phosphate. It participates in metabolic intermediate biosynthesis; chorismate biosynthesis; chorismate from D-erythrose 4-phosphate and phosphoenolpyruvate: step 6/7. Catalyzes the transfer of the enolpyruvyl moiety of phosphoenolpyruvate (PEP) to the 5-hydroxyl of shikimate-3-phosphate (S3P) to produce enolpyruvyl shikimate-3-phosphate and inorganic phosphate. The sequence is that of 3-phosphoshikimate 1-carboxyvinyltransferase from Leuconostoc citreum (strain KM20).